Reading from the N-terminus, the 90-residue chain is Large ribosomal subunit protein bL27 (90 aa).

Residues 1 to 22 are disordered; that stretch reads MAHKKSGGSSSNGRDSAGRRLG.

It belongs to the bacterial ribosomal protein bL27 family.

In Caulobacter sp. (strain K31), this protein is Large ribosomal subunit protein bL27.